Consider the following 374-residue polypeptide: Cell division protein DivIB (374 aa).

Positions 1–90 (MWKISNENDI…EEEHFADRLP (90 aa)) are disordered. Residues 1-103 (MWKISNENDI…KTRNKRLYRR (103 aa)) lie on the Cytoplasmic side of the membrane. The segment covering 39 to 53 (YLKKQAEEAASKGEN) has biased composition (basic and acidic residues). A compositionally biased stretch (polar residues) spans 56–75 (AEVTITLQEQSQEEPQQHLP). The chain crosses the membrane as a helical span at residues 104–124 (LAFILTCLGTAILVALYFVSP). Residues 125–374 (LSRLSEVTVS…GENQEVQQAE (250 aa)) lie on the Extracellular side of the membrane. Positions 126-197 (SRLSEVTVSG…NSFKIDIQEY (72 aa)) constitute a POTRA domain. Positions 325 to 374 (KESEETGSEVSEDSAVENQEVVDPNAGVATDGANNGTPTNGENQEVQQAE) are disordered. Residues 326-339 (ESEETGSEVSEDSA) are compositionally biased toward acidic residues. Residues 356 to 374 (GANNGTPTNGENQEVQQAE) show a composition bias toward polar residues.

Belongs to the FtsQ/DivIB family. DivIB subfamily.

The protein resides in the cell membrane. Functionally, cell division protein that may be involved in stabilizing or promoting the assembly of the division complex. The protein is Cell division protein DivIB of Enterococcus faecalis (strain 62).